The sequence spans 89 residues: Small ribosomal subunit protein uS15 (89 aa).

The protein belongs to the universal ribosomal protein uS15 family. Part of the 30S ribosomal subunit. Forms a bridge to the 50S subunit in the 70S ribosome, contacting the 23S rRNA.

One of the primary rRNA binding proteins, it binds directly to 16S rRNA where it helps nucleate assembly of the platform of the 30S subunit by binding and bridging several RNA helices of the 16S rRNA. Its function is as follows. Forms an intersubunit bridge (bridge B4) with the 23S rRNA of the 50S subunit in the ribosome. In Blochmanniella pennsylvanica (strain BPEN), this protein is Small ribosomal subunit protein uS15.